We begin with the raw amino-acid sequence, 439 residues long: Glucose-6-phosphate 1-dehydrogenase (439 aa).

Lys100 is a binding site for NADP(+). The substrate site is built by His130, Lys134, Glu168, and Asp187. His192 serves as the catalytic Proton acceptor. Residue Lys288 participates in substrate binding.

The protein belongs to the glucose-6-phosphate dehydrogenase family.

It catalyses the reaction D-glucose 6-phosphate + NADP(+) = 6-phospho-D-glucono-1,5-lactone + NADPH + H(+). The protein operates within carbohydrate degradation; pentose phosphate pathway; D-ribulose 5-phosphate from D-glucose 6-phosphate (oxidative stage): step 1/3. Its function is as follows. Catalyzes the oxidation of glucose 6-phosphate to 6-phosphogluconolactone. The polypeptide is Glucose-6-phosphate 1-dehydrogenase (Chlamydia trachomatis serovar D (strain ATCC VR-885 / DSM 19411 / UW-3/Cx)).